We begin with the raw amino-acid sequence, 344 residues long: MSEPIRLTQYSHGAGCGCKISPKVLDVILAESGTQALDPKLWVGNASRDDAAVYALDDERGVVSTTDFFMPIVDDPYDFGRIAATNAISDIYAMGGDPLMAIAILGWPVNVLPPEVAREVIRGGRAVCAEAGIPLAGGHSIDAPEPIFGLAVTGVVSKRHLKRNDTASAGCQLYLTKPLGIGILTTAEKKAKLRVQDQGLARDWMCTLNTPGSRFGKLDGVKAMTDVTGFGLLGHLVELAEGSGLTAHLNYAAVPRLPSVDHYLAEGCIPGGTLRNYDSYGHKISALSDDQKHLLCDPQTSGGLLVAVAPEGEAEFLAVAAELGLKLSPIGKLVERQSHAVEVI.

Cys16 is an active-site residue. ATP contacts are provided by residues Lys19 and 47-49 (SRD). Asp50 is a binding site for Mg(2+). ATP contacts are provided by residues Asp67, Asp90, and 138-140 (GHS). Position 90 (Asp90) interacts with Mg(2+). Asp226 is a Mg(2+) binding site.

The protein belongs to the selenophosphate synthase 1 family. Class I subfamily. As to quaternary structure, homodimer. Requires Mg(2+) as cofactor.

It carries out the reaction hydrogenselenide + ATP + H2O = selenophosphate + AMP + phosphate + 2 H(+). In terms of biological role, synthesizes selenophosphate from selenide and ATP. The chain is Selenide, water dikinase from Pseudomonas putida (strain ATCC 47054 / DSM 6125 / CFBP 8728 / NCIMB 11950 / KT2440).